Reading from the N-terminus, the 738-residue chain is MLGQCTLLPVLAGLLSLESALSQLCTKDNVSTCQDCIRSGPSCAWCQKLNFTGRGEPDSVRCDTPEQLLLKGCTSEYLVDPKSLAESQEDKERDQRQLSPRNVTVFLRPGQAATFKVDFQRTQDNSVDLYFLMGLSGSAQGHLSNVQTLGSDLLKALNEISRSGRIGFGSIVNMTFQHILKLTADSSQFQRELRKQLVSGKLATPKGQLDAVVQVAICLGEIGWRNGTRFLVLVTDNDFHLAKDKTLGTRQNTSDGRCHLDDGMYRSRGEPDYQSVVQLASKLAENNIQPIFVVPSRMVKTYEKLTTFIPKLTIGELSDDSSNVAQLIRNAYSKLSSIVVLNHSTIPSILKVTYDSYCSNGTSNPGKPSGDCSGVQINDQVTFQVNITASECFREQFFFIQALGFMDSVTVRVLPLCECQCQEQSQHHSLCGGKGAMECGICRCNSGYAGKNCECQTQGPSSQDLEGSCRKDNSSIMCSGLGDCICGQCECHTSDIPNKEIYGQYCECNNVNCERYDGQVCGGPERGHCSCGRCFCRYGFVGSACQCRMSTSGCLNNRMVECSGHGRCYCNRCLCDPGYQPPLCEKRPGYFHRCSEYYSCARCLKDNSAIKCRECWNLLFSNTPFSNKTCMTERDSEGCWTTYTLYQPDQSDINSIYIKESLVCAEISNTTILLGVIVGVLLAVIFLLVYCMVYLKGTQKAAKLPRKGGAQSTLAQQPHFQEPHHVEPVWNQERQGTQ.

A signal peptide spans methionine 1–serine 22. Residues glutamine 23–threonine 671 are Extracellular-facing. A PSI domain is found at leucine 24 to threonine 74. Intrachain disulfides connect cysteine 25–cysteine 419, cysteine 33–cysteine 43, cysteine 36–cysteine 73, cysteine 46–cysteine 62, cysteine 218–cysteine 258, cysteine 358–cysteine 372, cysteine 421–cysteine 439, cysteine 431–cysteine 442, cysteine 444–cysteine 453, cysteine 455–cysteine 486, cysteine 469–cysteine 484, cysteine 478–cysteine 489, cysteine 491–cysteine 506, cysteine 508–cysteine 531, cysteine 513–cysteine 529, cysteine 521–cysteine 534, cysteine 536–cysteine 545, cysteine 547–cysteine 570, cysteine 554–cysteine 568, cysteine 562–cysteine 573, cysteine 575–cysteine 584, cysteine 594–cysteine 603, and cysteine 600–cysteine 664. Asparagine 29 is a glycosylation site (N-linked (GlcNAc...) asparagine). N-linked (GlcNAc...) asparagine glycans are attached at residues asparagine 50, asparagine 102, asparagine 173, asparagine 226, asparagine 252, asparagine 342, asparagine 360, and asparagine 386. A VWFA domain is found at serine 126–arginine 329. 4 I-EGF domains span residues cysteine 421–glutamate 454, cysteine 455–glutamate 507, cysteine 508–glutamine 546, and cysteine 547–glutamate 585. Residue asparagine 473 is glycosylated (N-linked (GlcNAc...) asparagine). N-linked (GlcNAc...) asparagine glycosylation is found at asparagine 627 and asparagine 669. Residues isoleucine 672–methionine 692 traverse the membrane as a helical segment. The Cytoplasmic segment spans residues valine 693–glutamine 738. Residues glycine 709–glutamine 738 form a disordered region. The span at alanine 710–histidine 719 shows a compositional bias: polar residues.

The protein belongs to the integrin beta chain family. Monomer and homodimer. Unlike integrin beta chains, no alpha chain partner has yet been found. Post-translationally, N-glycosylated. In terms of tissue distribution, expressed predominantly in maturing and mature neutrophils.

Its subcellular location is the cell membrane. In terms of biological role, during inflammatory stimulation, plays a role in retaining Cxcl13-expressing cells at the site of the inflammatory response. In Mus musculus (Mouse), this protein is Integrin beta-2-like protein.